The primary structure comprises 449 residues: uncharacterized protein (449 aa).

The N-terminal stretch at M1–A20 is a signal peptide. Topologically, residues A21–T400 are extracellular. An N-linked (GlcNAc...) asparagine glycan is attached at N49. 3 disordered regions span residues A72 to G101, M154 to S187, and Q215 to Q381. Composition is skewed to low complexity over residues M154–G184 and Q215–S234. Composition is skewed to polar residues over residues G255 to N279 and T352 to G367. A helical membrane pass occupies residues L401–A421. Topologically, residues L422–M449 are cytoplasmic.

As to expression, highest expression in heart, placenta, liver, pancreas and colon. Also detected in brain, lung, skeletal muscle, kidney, spleen, prostate, testis, ovary and small intestine. Lowest expression in thymus and leukocytes.

It localises to the cell membrane. It is found in the golgi apparatus. The protein resides in the trans-Golgi network membrane. This is an uncharacterized protein from Homo sapiens (Human).